Consider the following 233-residue polypeptide: Orotidine 5'-phosphate decarboxylase (233 aa).

Substrate-binding positions include aspartate 11, lysine 34, 61–70, threonine 117, arginine 179, glutamine 189, glycine 209, and arginine 210; that span reads DLKLHDIPNT. Lysine 63 serves as the catalytic Proton donor.

The protein belongs to the OMP decarboxylase family. Type 1 subfamily. In terms of assembly, homodimer.

The enzyme catalyses orotidine 5'-phosphate + H(+) = UMP + CO2. It functions in the pathway pyrimidine metabolism; UMP biosynthesis via de novo pathway; UMP from orotate: step 2/2. Functionally, catalyzes the decarboxylation of orotidine 5'-monophosphate (OMP) to uridine 5'-monophosphate (UMP). In Streptococcus agalactiae serotype III (strain NEM316), this protein is Orotidine 5'-phosphate decarboxylase.